Consider the following 254-residue polypeptide: Phosphate import ATP-binding protein PstB (254 aa).

Positions 7-249 constitute an ABC transporter domain; that stretch reads MVAESMSFYY…PREKQTEDYI (243 aa). 39 to 46 provides a ligand contact to ATP; it reads GPSGCGKS.

It belongs to the ABC transporter superfamily. Phosphate importer (TC 3.A.1.7) family. The complex is composed of two ATP-binding proteins (PstB), two transmembrane proteins (PstC and PstA) and a solute-binding protein (PstS).

Its subcellular location is the cell inner membrane. The catalysed reaction is phosphate(out) + ATP + H2O = ADP + 2 phosphate(in) + H(+). Its function is as follows. Part of the ABC transporter complex PstSACB involved in phosphate import. Responsible for energy coupling to the transport system. The chain is Phosphate import ATP-binding protein PstB from Chlorobium chlorochromatii (strain CaD3).